Reading from the N-terminus, the 307-residue chain is Cyclin-dependent kinase 5 activator 1 (307 aa).

A lipid anchor (N-myristoyl glycine) is attached at G2. At S8 the chain carries Phosphoserine; by CDK5. A disordered region spans residues 97–136; sequence TFAQPPPAQPPAPPASQLSGSQTGGSSSVKKAPHPAVTSA. Positions 100–110 are enriched in pro residues; the sequence is QPPPAQPPAPP. Over residues 111–124 the composition is skewed to low complexity; the sequence is ASQLSGSQTGGSSS. T138 carries the phosphothreonine; by CDK5 modification.

The protein belongs to the cyclin-dependent kinase 5 activator family. In terms of assembly, heterodimer composed of a catalytic subunit CDK5 and a regulatory subunit CDK5R1 (p25) and macromolecular complex composed of at least CDK5, CDK5R1 (p35) and CDK5RAP1 or CDK5RAP2 or CDK5RAP3. Only the heterodimer shows kinase activity. Interacts with EPHA4 and NGEF; may mediate the activation of NGEF by EPHA4. Interacts with RASGRF2. The complex p35/CDK5 interacts with CLOCK. In terms of processing, the p35 form is proteolytically cleaved by calpain, giving rise to the p25 form. P35 has a 5 to 10 fold shorter half-life compared to p25. The conversion results in deregulation of the CDK5 kinase: p25/CDK5 kinase displays an increased and altered tau phosphorylation in comparison to the p35/CDK5 kinase in vivo. Myristoylated. A proper myristoylation signal is essential for the proper distribution of p35. Post-translationally, ubiquitinated, leading to its degradation: degradation of p35 by proteasome results in down-regulation of CDK5 activity. During this process, CDK5 phosphorylates p35 and induces its ubiquitination and subsequent degradation. Ubiquitinated by the CRL2(FEM1B) complex, which recognizes the -Gly-Leu-Asp-Arg C-degron at the C-terminus, leading to its degradation. In terms of processing, phosphorylation at Ser-8 and Thr-138 by CDK5 prevents calpain-mediated proteolysis. Brain and neuron specific.

The protein resides in the cell membrane. Its subcellular location is the cell projection. It is found in the neuron projection. The protein localises to the nucleus. It localises to the cytoplasm. The protein resides in the perinuclear region. Its subcellular location is the perikaryon. Its function is as follows. p35 is a neuron specific activator of CDK5. The complex p35/CDK5 is required for neurite outgrowth and cortical lamination. Involved in dendritic spine morphogenesis by mediating the EFNA1-EPHA4 signaling. Activator of TPKII. The complex p35/CDK5 participates in the regulation of the circadian clock by modulating the function of CLOCK protein: phosphorylates CLOCK at 'Thr-451' and 'Thr-461' and regulates the transcriptional activity of the CLOCK-BMAL1 heterodimer in association with altered stability and subcellular distribution. In Homo sapiens (Human), this protein is Cyclin-dependent kinase 5 activator 1 (CDK5R1).